The chain runs to 280 residues: MHPGDGHTAACLIGWPAAHSRSPLIHHYWLRTLGIPGGYSIESVPPEGFAEFVLNLRAHGYSGANVTIPHKERALQLTQPDDRARAVGAANTLYYDGDVLRSTNTDVEGFIANLDASAPGWDRTPHAVVLGAGGSARAVLFGLLERGIERIALANRSLERAQALADLFGERVVPIAWTDAPAALPGAGLLVNTTSLGMKGQPSLDLDLEPLPSDATVADLVYVPLETELLAEARGRGLRTADGLGMLLHQAVRGFELWFGARPHVTAELRALVEADLAAK.

Shikimate contacts are provided by residues 20–22 and Thr-67; that span reads SRS. Lys-71 (proton acceptor) is an active-site residue. Residue Asp-82 coordinates NADP(+). Shikimate contacts are provided by Asn-91 and Asp-106. NADP(+)-binding positions include 131 to 135 and Leu-220; that span reads GAGGS. Residue Tyr-222 coordinates shikimate. Gly-243 provides a ligand contact to NADP(+).

It belongs to the shikimate dehydrogenase family. As to quaternary structure, homodimer.

It carries out the reaction shikimate + NADP(+) = 3-dehydroshikimate + NADPH + H(+). The protein operates within metabolic intermediate biosynthesis; chorismate biosynthesis; chorismate from D-erythrose 4-phosphate and phosphoenolpyruvate: step 4/7. In terms of biological role, involved in the biosynthesis of the chorismate, which leads to the biosynthesis of aromatic amino acids. Catalyzes the reversible NADPH linked reduction of 3-dehydroshikimate (DHSA) to yield shikimate (SA). In Rhodopseudomonas palustris (strain HaA2), this protein is Shikimate dehydrogenase (NADP(+)).